We begin with the raw amino-acid sequence, 354 residues long: UDP-N-acetylglucosamine--N-acetylmuramyl-(pentapeptide) pyrophosphoryl-undecaprenol N-acetylglucosamine transferase (354 aa).

UDP-N-acetyl-alpha-D-glucosamine contacts are provided by residues 11–13 (TAG), Arg164, Ser194, and Gln289.

It belongs to the glycosyltransferase 28 family. MurG subfamily.

It localises to the cell membrane. The enzyme catalyses di-trans,octa-cis-undecaprenyl diphospho-N-acetyl-alpha-D-muramoyl-L-alanyl-D-glutamyl-meso-2,6-diaminopimeloyl-D-alanyl-D-alanine + UDP-N-acetyl-alpha-D-glucosamine = di-trans,octa-cis-undecaprenyl diphospho-[N-acetyl-alpha-D-glucosaminyl-(1-&gt;4)]-N-acetyl-alpha-D-muramoyl-L-alanyl-D-glutamyl-meso-2,6-diaminopimeloyl-D-alanyl-D-alanine + UDP + H(+). It participates in cell wall biogenesis; peptidoglycan biosynthesis. Functionally, cell wall formation. Catalyzes the transfer of a GlcNAc subunit on undecaprenyl-pyrophosphoryl-MurNAc-pentapeptide (lipid intermediate I) to form undecaprenyl-pyrophosphoryl-MurNAc-(pentapeptide)GlcNAc (lipid intermediate II). The chain is UDP-N-acetylglucosamine--N-acetylmuramyl-(pentapeptide) pyrophosphoryl-undecaprenol N-acetylglucosamine transferase from Lachnospira eligens (strain ATCC 27750 / DSM 3376 / VPI C15-48 / C15-B4) (Eubacterium eligens).